We begin with the raw amino-acid sequence, 926 residues long: Coatomer subunit beta'-2 (926 aa).

WD repeat units lie at residues 13 to 52 (QRSE…MAKS), 55 to 94 (VTEL…KVKV), 97 to 136 (AHSD…ACTQ), 140 to 180 (GHSH…PNFT), 183 to 224 (AHQK…CVQT), 227 to 266 (GHTH…LENT), 269 to 309 (YGLE…ASMD), 351 to 390 (TCDL…RSFG), and 461 to 501 (RIDV…SHFD). Residues 847-926 (EEESLENGDM…GTNNEGNPSA (80 aa)) form a disordered region. The span at 868–887 (NEQRNEDDVAEHVEEHHEEK) shows a compositional bias: basic and acidic residues. Residues 888 to 900 (EAEEEEGIVDGDS) show a composition bias toward acidic residues. The segment covering 917–926 (GTNNEGNPSA) has biased composition (polar residues).

The protein belongs to the WD repeat COPB2 family. In terms of assembly, oligomeric complex that consists of at least the alpha, beta, beta', gamma, delta, epsilon and zeta subunits.

The protein localises to the cytoplasm. Its subcellular location is the golgi apparatus membrane. The protein resides in the cytoplasmic vesicle. It localises to the COPI-coated vesicle membrane. Functionally, the coatomer is a cytosolic protein complex that binds to dilysine motifs and reversibly associates with Golgi non-clathrin-coated vesicles, which further mediate biosynthetic protein transport from the ER, via the Golgi up to the trans Golgi network. Coatomer complex is required for budding from Golgi membranes, and is essential for the retrograde Golgi-to-ER transport of dilysine-tagged proteins. The sequence is that of Coatomer subunit beta'-2 from Arabidopsis thaliana (Mouse-ear cress).